The following is a 325-amino-acid chain: Pyruvate dehydrogenase E1 component subunit beta (325 aa).

Glu60 provides a ligand contact to thiamine diphosphate.

In terms of assembly, heterodimer of an alpha and a beta chain. Requires thiamine diphosphate as cofactor.

The catalysed reaction is N(6)-[(R)-lipoyl]-L-lysyl-[protein] + pyruvate + H(+) = N(6)-[(R)-S(8)-acetyldihydrolipoyl]-L-lysyl-[protein] + CO2. The pyruvate dehydrogenase complex catalyzes the overall conversion of pyruvate to acetyl-CoA and CO(2). It contains multiple copies of three enzymatic components: pyruvate dehydrogenase (E1), dihydrolipoamide acetyltransferase (E2) and lipoamide dehydrogenase (E3). In Staphylococcus epidermidis (strain ATCC 35984 / DSM 28319 / BCRC 17069 / CCUG 31568 / BM 3577 / RP62A), this protein is Pyruvate dehydrogenase E1 component subunit beta (pdhB).